The following is a 542-amino-acid chain: Valine N-monooxygenase 1 (542 aa).

Residues 1–21 (MAMNVSTTIGLLNATSFASSS) lie on the Cytoplasmic side of the membrane. The chain crosses the membrane as a helical; Signal-anchor for type II membrane protein span at residues 22 to 42 (SINTVKILFVTLFISIVSTIV). The Lumenal portion of the chain corresponds to 43–542 (KLQKSAANKE…LAPHLYPTSP (500 aa)). Asn278 is a glycosylation site (N-linked (GlcNAc...) asparagine). A heme-binding site is contributed by Cys478. Residue Asn506 is glycosylated (N-linked (GlcNAc...) asparagine).

Belongs to the cytochrome P450 family. Heme is required as a cofactor. In terms of tissue distribution, expressed in the epidermis, the next two cortex cell layers, the endodermis and the pericycle of leaf petioles. Strong expression around the laticifers among the phloem cells and in parenchymatic cells between the protoxylem and the metaxylem cells. In the leaves, preferentially expressed in the mesophyll cells adjacent to the epidermis.

Its subcellular location is the microsome membrane. The enzyme catalyses L-valine + 2 reduced [NADPH--hemoprotein reductase] + 2 O2 = (E)-2-methylpropanal oxime + 2 oxidized [NADPH--hemoprotein reductase] + CO2 + 3 H2O + 2 H(+). It catalyses the reaction L-valine + reduced [NADPH--hemoprotein reductase] + O2 = N-hydroxy-L-valine + oxidized [NADPH--hemoprotein reductase] + H2O + 2 H(+). The catalysed reaction is N-hydroxy-L-valine + reduced [NADPH--hemoprotein reductase] + O2 = N,N-dihydroxy-L-valine + oxidized [NADPH--hemoprotein reductase] + H2O + H(+). It carries out the reaction L-isoleucine + 2 reduced [NADPH--hemoprotein reductase] + 2 O2 = (1E,2S)-2-methylbutanal oxime + 2 oxidized [NADPH--hemoprotein reductase] + CO2 + 3 H2O + 2 H(+). The enzyme catalyses L-isoleucine + reduced [NADPH--hemoprotein reductase] + O2 = N-hydroxy-L-isoleucine + oxidized [NADPH--hemoprotein reductase] + H2O + 2 H(+). It catalyses the reaction N-hydroxy-L-isoleucine + reduced [NADPH--hemoprotein reductase] + O2 = N,N-dihydroxy-L-isoleucine + oxidized [NADPH--hemoprotein reductase] + H2O + H(+). The protein operates within secondary metabolite biosynthesis. Inhibited by tetcyclasis but not by 1-aminobenzotriazole (ABT). Involved in the biosynthesis of the cyanogenic glucosides linamarin and lotaustralin. Can use L-valine or L-isoleucine as substrate, but not L-leucine, L-phenylalanine, L-tyrosine, D-valine or D-isoleucine. Catalyzes multi-step reactions starting with two successive N-hydroxylations using L-valine and L-isoleucine as substrates leading to the formation of N,N-dihydroxy-L-valine and N,N-dihydroxy-L-isoleucine, respectively; following spontaneous reactions lead to the production of (E)-2-methylpropanal oxime and (1E,2S)-2-methylbutanal oxime, respectively. In Manihot esculenta (Cassava), this protein is Valine N-monooxygenase 1.